The chain runs to 539 residues: 2-isopropylmalate synthase (539 aa).

In terms of domain architecture, Pyruvate carboxyltransferase spans 8-269 (VLIFDTTLRD…YFNPFFGRPP (262 aa)). The Mn(2+) site is built by D17, H208, H210, and N244. The tract at residues 408-539 (QLKLVQVSCG…DLAKVDKKGI (132 aa)) is regulatory domain.

This sequence belongs to the alpha-IPM synthase/homocitrate synthase family. LeuA type 1 subfamily. As to quaternary structure, homodimer. The cofactor is Mn(2+).

It localises to the cytoplasm. It carries out the reaction 3-methyl-2-oxobutanoate + acetyl-CoA + H2O = (2S)-2-isopropylmalate + CoA + H(+). The protein operates within amino-acid biosynthesis; L-leucine biosynthesis; L-leucine from 3-methyl-2-oxobutanoate: step 1/4. In terms of biological role, catalyzes the condensation of the acetyl group of acetyl-CoA with 3-methyl-2-oxobutanoate (2-ketoisovalerate) to form 3-carboxy-3-hydroxy-4-methylpentanoate (2-isopropylmalate). This chain is 2-isopropylmalate synthase, found in Prochlorococcus marinus (strain NATL1A).